A 1012-amino-acid polypeptide reads, in one-letter code: Multiple C2 domain and transmembrane region protein 10 (1012 aa).

One can recognise a C2 1 domain in the interval Met1–Tyr115. Residues Glu141 to Met203 are disordered. Over residues Arg148–Lys160 the composition is skewed to basic residues. 2 stretches are compositionally biased toward low complexity: residues Val161 to Gln180 and Arg188 to Arg202. 3 consecutive C2 domains span residues Ser262–Tyr376, Lys411–Phe551, and Tyr585–Tyr710. Positions 296, 344, 346, and 349 each coordinate Ca(2+). 3 helical membrane-spanning segments follow: residues Phe810–Met830, Val841–Leu861, and Ala952–Val972.

Belongs to the MCTP family. The cofactor is Ca(2+). In terms of tissue distribution, highly expressed in roots meristems, shoot apical meristems (SAMs) and in incipient leaf primordia. Observed in flowers.

It is found in the endoplasmic reticulum membrane. In terms of biological role, may function as a signaling molecule by regulating the trafficking of other regulators. This Arabidopsis thaliana (Mouse-ear cress) protein is Multiple C2 domain and transmembrane region protein 10.